The primary structure comprises 397 residues: Tauropine dehydrogenase (397 aa).

The protein belongs to the lysopine/nopaline/octopine/opine/vitopine dehydrogenases family.

The enzyme catalyses tauropine + NAD(+) + H2O = taurine + pyruvate + NADH + H(+). With respect to regulation, subject to substrate inhibition by pyruvate for the reverse reaction but not for the forward reaction of the tauropine dehydrogenase activity. In terms of biological role, may play a role in maintaining a redox balance during environmental and functional hypoxia. Exhibits high specificity for taurine and in addition, requires both alpha amino group and C-2 carbon chain length as a critical factor for active site binding of the amino acid. A methyl group in the beta position may be critical for active site binding of the keto acid. In the reverse reaction requires NAD(H) for the activity but not NADP(H). The chain is Tauropine dehydrogenase from Arabella iricolor (Opal worm).